A 440-amino-acid chain; its full sequence is Xylose isomerase (440 aa).

Residues His-100 and Asp-103 contribute to the active site. 7 residues coordinate Mg(2+): Glu-231, Glu-267, His-270, Asp-295, Asp-306, Asp-308, and Asp-338.

This sequence belongs to the xylose isomerase family. As to quaternary structure, homotetramer. Mg(2+) is required as a cofactor.

The protein localises to the cytoplasm. The enzyme catalyses alpha-D-xylose = alpha-D-xylulofuranose. The chain is Xylose isomerase from Burkholderia cenocepacia (strain ATCC BAA-245 / DSM 16553 / LMG 16656 / NCTC 13227 / J2315 / CF5610) (Burkholderia cepacia (strain J2315)).